Consider the following 102-residue polypeptide: MAENKMRIKLKGYDHAIVDQSITKIIQAAEGTGAKVRGPIPLPTEKQVITILRAVHKYKDSREQFEMRTHKRLLEILNPTAATMDVLKRVQLPSGVDIEIKL.

The protein belongs to the universal ribosomal protein uS10 family. In terms of assembly, part of the 30S ribosomal subunit.

Involved in the binding of tRNA to the ribosomes. This chain is Small ribosomal subunit protein uS10, found in Mycoplasma capricolum subsp. capricolum (strain California kid / ATCC 27343 / NCTC 10154).